A 148-amino-acid chain; its full sequence is Large ribosomal subunit protein bL9 (148 aa).

It belongs to the bacterial ribosomal protein bL9 family.

Its function is as follows. Binds to the 23S rRNA. In Alkaliphilus oremlandii (strain OhILAs) (Clostridium oremlandii (strain OhILAs)), this protein is Large ribosomal subunit protein bL9.